The following is a 704-amino-acid chain: Ankyrin repeat and LEM domain-containing protein 1 homolog (704 aa).

Positions 1–29 (MPPNGAITTTPRSRMPPTTPSSGKSRPKK) are disordered. A compositionally biased stretch (low complexity) spans 8 to 22 (TTTPRSRMPPTTPSS). ANK repeat units lie at residues 28–59 (KKET…NVNA) and 63–93 (DGAT…PMSA). Disordered regions lie at residues 247 to 293 (NEDV…SQET), 314 to 358 (NAGL…ANTT), and 381 to 421 (SKSA…TTVD). The span at 276-288 (RKQRTPVNHHKRS) shows a compositional bias: basic residues. 2 stretches are compositionally biased toward low complexity: residues 329-346 (EPAI…TPKT) and 384-405 (AKSS…SFSS). One can recognise an LEM domain in the interval 425-470 (IRKIRRLREGELKSELKKFGISPAGPLDARTRRLYEKKLLIERRKI). One can recognise a GIY-YIG domain in the interval 525-635 (YNAFCYLIMD…AVKLKNLRNK (111 aa)).

Post-translationally, phosphorylated. Phosphorylated during telophase when localized at the midbody.

Its subcellular location is the cytoplasm. It is found in the nucleus. It localises to the chromosome. The protein resides in the midbody. The protein localises to the cytoskeleton. Its subcellular location is the spindle. Inhibited by EDTA. In terms of biological role, endonuclease which, in association with baf-1, plays an essential role during embryogenesis in the DNA repair response following DNA damage probably by ensuring proper chromosome segregation. Also required during postembryonic cell divisions after DNA damage caused by ionizing radiation to ensure normal cell proliferation. Resolves chromatin bridges in late mitosis that result from incomplete DNA replication, defective chromosome condensation or unresolved recombination intermediates. Together with brc-1, contributes to genome integrity by resolving mitotic chromatin bridges that result from incomplete processing of DNA breaks. In parallel to the slx-1/mus-81 pathway, acts in processing early recombination intermediates in meiotic prophase I to prevent illegitimate recombination. Also involved in processing remaining, erroneous recombination intermediates that persist into the second meiotic division. This Caenorhabditis elegans protein is Ankyrin repeat and LEM domain-containing protein 1 homolog.